The chain runs to 236 residues: MSRLLPLLRSRTARSLRPGPAAAAAPRPPSWCCCGRGLLALAAPGGPRALGTHPKKEPIEALNTAQGARDFIYSLHSSERSCLLKELHRFESIAIAQEKLEAQPPTPGQLRYVFIHNAIPFIGFGFLDNAIMIVAGTHIELSIGIILGISTMAAAALGNLVSDLAGLGLAGYVEALASRLGLSIPDLSPKQVDMWQTRVSSHLGKAVGVTIGCILGMFPLIFFGGGEDDEKLEKKN.

A mitochondrion-targeting transit peptide spans 1-57; sequence MSRLLPLLRSRTARSLRPGPAAAAAPRPPSWCCCGRGLLALAAPGGPRALGTHPKKE. The Cytoplasmic portion of the chain corresponds to 58–106; the sequence is PIEALNTAQGARDFIYSLHSSERSCLLKELHRFESIAIAQEKLEAQPPT. Residues 107–127 traverse the membrane as a helical segment; it reads PGQLRYVFIHNAIPFIGFGFL. Over 128 to 138 the chain is Extracellular; sequence DNAIMIVAGTH. The helical transmembrane segment at 139 to 161 threads the bilayer; it reads IELSIGIILGISTMAAAALGNLV. Residues 162-205 are Cytoplasmic-facing; the sequence is SDLAGLGLAGYVEALASRLGLSIPDLSPKQVDMWQTRVSSHLGK. The helical transmembrane segment at 206 to 226 threads the bilayer; sequence AVGVTIGCILGMFPLIFFGGG. Residues 227-236 lie on the Extracellular side of the membrane; sequence EDDEKLEKKN.

In terms of assembly, monomer. Homodimer. Interacts with GJA1. Interacts weakly with DSP. Interacts with SCN1B.

The protein localises to the cell membrane. It is found in the mitochondrion inner membrane. Its function is as follows. Essential for maintaining proper cardiac intercalated disk (ICD) structure and function as well as cardiac conduction velocity in the heart. Its association with SCN1B is required for stabilizing the perinexus in the ICD and for localization of GJA1 and SCN5A to the ICD. May regulate the function of the gap junction protein GJA1 and may contribute to the stability and proper localization of GJA1 to cardiac intercalated disk thereby regulating gap junction communication. Regulates mitochondrial respiration and mitochondrial DNA copy number maintenance. In Bos taurus (Bovine), this protein is Transmembrane protein 65 (TMEM65).